A 440-amino-acid chain; its full sequence is Virion host shutoff protein (440 aa).

2 disordered regions span residues 98–144 (NIDH…RRKT) and 265–312 (IDEP…AGPG). Over residues 266–281 (DEPPAASEESSASDQQ) the composition is skewed to low complexity.

It belongs to the herpesviridae VHS protein family.

The protein resides in the virion. Functionally, minor structural protein that acts as an endoribonuclease during lytic infection. Degrades host mRNAs in the cytoplasm by cutting them at preferred sites, including some in regions of translation initiation. This Amazona oratrix (yellow-headed parrot) protein is Virion host shutoff protein (UL41).